The sequence spans 545 residues: Glucose-6-phosphate isomerase (545 aa).

E351 serves as the catalytic Proton donor. Catalysis depends on residues H382 and K510.

The protein belongs to the GPI family.

The protein localises to the cytoplasm. It carries out the reaction alpha-D-glucose 6-phosphate = beta-D-fructose 6-phosphate. It participates in carbohydrate biosynthesis; gluconeogenesis. Its pathway is carbohydrate degradation; glycolysis; D-glyceraldehyde 3-phosphate and glycerone phosphate from D-glucose: step 2/4. Functionally, catalyzes the reversible isomerization of glucose-6-phosphate to fructose-6-phosphate. This is Glucose-6-phosphate isomerase from Shewanella oneidensis (strain ATCC 700550 / JCM 31522 / CIP 106686 / LMG 19005 / NCIMB 14063 / MR-1).